Consider the following 480-residue polypeptide: UDP-N-acetylmuramate--L-alanine ligase (480 aa).

Gly129–Thr135 is an ATP binding site.

Belongs to the MurCDEF family.

The protein resides in the cytoplasm. The catalysed reaction is UDP-N-acetyl-alpha-D-muramate + L-alanine + ATP = UDP-N-acetyl-alpha-D-muramoyl-L-alanine + ADP + phosphate + H(+). It functions in the pathway cell wall biogenesis; peptidoglycan biosynthesis. Cell wall formation. In Syntrophus aciditrophicus (strain SB), this protein is UDP-N-acetylmuramate--L-alanine ligase.